The chain runs to 436 residues: MSSRKSKNNSLIHTECLSQVQRILRERFCHQSPHSNLFGVQVQYKHLSELLKRTALHGESNSVLIIGPRGSGKTMLINHALKELMEIEEVSENVLQVHLNGLLQINDKIALKEITRQLNLENVVGDKVFGSFAENLSFLLEALKKGDRTSSCPVVFILDEFDLFAHHKNQTLLYNLFDISQSAQTPVAVIGLTCRLDILELLEKRVKSRFSHRQIHLMNSFGFPQYVKIFKEQLSLPAEFPDKVFAEKWNENVQYLSEDRSVQEVLQKHFNISKNLRSLHMLLMLALNRVTASHPFMTAVDLIEASQLCSMDSKANIVHGLSVLEICLIIAMKHLNDIYEEEPFNFQMVYNEFQKFVQRKAHSVYNFEKPVVMKAFEHLQQLELIKPMERTSGNSQREYQLMKLLLDNTQIMNALQKYPNCPTDVRQWATSSLSWL.

Lys7 bears the N6-methyllysine mark. Gly67–Thr74 is an ATP binding site.

This sequence belongs to the ORC4 family. Component of ORC, a complex composed of at least 6 subunits: ORC1, ORC2, ORC3, ORC4, ORC5 and ORC6. ORC is regulated in a cell-cycle dependent manner. It is sequentially assembled at the exit from anaphase of mitosis and disassembled as cells enter S phase. Interacts with DBF4. Interacts with POLQ.

It localises to the nucleus. Its function is as follows. Component of the origin recognition complex (ORC) that binds origins of replication. DNA-binding is ATP-dependent. The specific DNA sequences that define origins of replication have not been identified yet. ORC is required to assemble the pre-replication complex necessary to initiate DNA replication. Binds histone H3 and H4 trimethylation marks H3K9me3, H3K27me3 and H4K20me3. This is Origin recognition complex subunit 4 (ORC4) from Pongo abelii (Sumatran orangutan).